We begin with the raw amino-acid sequence, 136 residues long: Active regulator of SIRT1 (136 aa).

Arg7 bears the Citrulline mark. Positions 13 to 58 (LAASEAPRDPPGQAKPRGAPVKRPRKTKAIQAQKLRNSAKGKVPKS) are disordered. Ser84 bears the Phosphoserine mark.

Belongs to the AROS family. Part of the small subunit (SSU) processome, composed of more than 70 proteins and the RNA chaperone small nucleolar RNA (snoRNA) U3. Interacts with RPS19; the interaction is direct and mediates the integration of RPS19 in state post-A1. Interacts with SIRT1. In terms of processing, citrullinated by PADI4. Widely expressed (at protein level).

It localises to the nucleus. The protein resides in the nucleolus. Functionally, part of the small subunit (SSU) processome, first precursor of the small eukaryotic ribosomal subunit. During the assembly of the SSU processome in the nucleolus, many ribosome biogenesis factors, an RNA chaperone and ribosomal proteins associate with the nascent pre-rRNA and work in concert to generate RNA folding, modifications, rearrangements and cleavage as well as targeted degradation of pre-ribosomal RNA by the RNA exosome. Acts as a chaperone that specifically mediates the integration of RPS19 in state post-A1. Direct regulator of SIRT1. Enhances SIRT1-mediated deacetylation of p53/TP53, thereby participating in inhibition of p53/TP53-mediated transcriptional activity. The protein is Active regulator of SIRT1 of Homo sapiens (Human).